The following is a 236-amino-acid chain: tRNA (guanine-N(7)-)-methyltransferase (236 aa).

S-adenosyl-L-methionine is bound by residues Asp35, Glu60, Asn87, and Asp113. Asp113 is an active-site residue. Residues Lys117 and Asp149 each contribute to the substrate site.

This sequence belongs to the class I-like SAM-binding methyltransferase superfamily. TrmB family.

The catalysed reaction is guanosine(46) in tRNA + S-adenosyl-L-methionine = N(7)-methylguanosine(46) in tRNA + S-adenosyl-L-homocysteine. It participates in tRNA modification; N(7)-methylguanine-tRNA biosynthesis. Catalyzes the formation of N(7)-methylguanine at position 46 (m7G46) in tRNA. The polypeptide is tRNA (guanine-N(7)-)-methyltransferase (Parasynechococcus marenigrum (strain WH8102)).